Here is a 64-residue protein sequence, read N- to C-terminus: Fatty acid synthase (64 aa).

The 64-residue stretch at 1–64 folds into the Carrier domain; it reads AEGEGQRDLL…VLSMREVRQL (64 aa). Ser38 is modified (O-(pantetheine 4'-phosphoryl)serine; alternate). At Ser38 the chain carries Phosphoserine; alternate.

In terms of assembly, homodimer which is arranged in a head to tail fashion. Interacts with CEACAM1; this interaction is insulin and phosphorylation-dependent; reduces fatty-acid synthase activity.

The protein localises to the cytoplasm. Its subcellular location is the melanosome. The enzyme catalyses acetyl-CoA + n malonyl-CoA + 2n NADPH + 2n H(+) = a long-chain fatty acid + (n+1) CoA + n CO2 + 2n NADP(+).. Its function is as follows. Fatty acid synthetase catalyzes the formation of long-chain fatty acids from acetyl-CoA, malonyl-CoA and NADPH. This multifunctional protein has 7 catalytic activities as an acyl carrier protein. This chain is Fatty acid synthase (FASN), found in Oryctolagus cuniculus (Rabbit).